We begin with the raw amino-acid sequence, 414 residues long: Thyroid hormone receptor beta-B (414 aa).

The modulating stretch occupies residues 1 to 59; the sequence is MPSSMSVRLFTASAAQRKKIQEGDCCVVLAGKTQGRFILIGAVARVSGYIPSYLDKDEL. 2 consecutive NR C4-type zinc fingers follow at residues 60-80 and 98-122; these read CVVCGDKATGYHYRCITCEGC and CKYEGKCVIDKVTRNQCQECRFKKC. The segment at residues 60-134 is a DNA-binding region (nuclear receptor); it reads CVVCGDKATG…VGMATDLVLD (75 aa). Residues 170-414 form the NR LBD domain; the sequence is EEWELIQVVT…PPLFLEVFED (245 aa).

It belongs to the nuclear hormone receptor family. NR1 subfamily.

It is found in the nucleus. High affinity receptor for triiodothyronine (T3). The protein is Thyroid hormone receptor beta-B (thrb-b) of Xenopus laevis (African clawed frog).